We begin with the raw amino-acid sequence, 1066 residues long: Zinc finger and BTB domain-containing protein 21 (1066 aa).

A BTB domain is found at 30 to 96; that stretch reads CDVLLIVGDQ…IYSSSLFVEK (67 aa). Residues 30-96 are mediates homodimerization; the sequence is CDVLLIVGDQ…IYSSSLFVEK (67 aa). K40 participates in a covalent cross-link: Glycyl lysine isopeptide (Lys-Gly) (interchain with G-Cter in SUMO1); alternate. Residue K40 forms a Glycyl lysine isopeptide (Lys-Gly) (interchain with G-Cter in SUMO2); alternate linkage. A compositionally biased stretch (polar residues) spans 154–177; the sequence is SRNEAQGKTVSQNQPDVSHTSRPS. The interval 154–196 is disordered; that stretch reads SRNEAQGKTVSQNQPDVSHTSRPSPSIAVKANTNKPHVPKPIE. Glycyl lysine isopeptide (Lys-Gly) (interchain with G-Cter in SUMO2) cross-links involve residues K255, K266, K273, K312, and K337. Residues S345 and S381 each carry the phosphoserine modification. Residue K383 forms a Glycyl lysine isopeptide (Lys-Gly) (interchain with G-Cter in SUMO2) linkage. The segment covering 388-399 has biased composition (basic and acidic residues); it reads DCSEKTALDDRP. Disordered regions lie at residues 388–442, 454–485, and 498–525; these read DCSE…DPSD, TAAA…AKRR, and KVNE…ADFP. Phosphoserine is present on residues S411 and S422. K430 participates in a covalent cross-link: Glycyl lysine isopeptide (Lys-Gly) (interchain with G-Cter in SUMO2). T431 carries the phosphothreonine modification. S434, S435, and S438 each carry phosphoserine. Residues 466–478 are compositionally biased toward basic and acidic residues; that stretch reads LSLKTEDDQKDMS. Residues K469 and K475 each participate in a glycyl lysine isopeptide (Lys-Gly) (interchain with G-Cter in SUMO2) cross-link. 2 consecutive C2H2-type zinc fingers follow at residues 546 to 569 and 575 to 598; these read FKCK…NMYH and YACD…QTQH. Residue S605 is modified to Phosphoserine. Glycyl lysine isopeptide (Lys-Gly) (interchain with G-Cter in SUMO2) cross-links involve residues K617, K643, and K659. A C2H2-type 3 zinc finger spans residues 670–692; that stretch reads YICTYCGKAYRFLSQFKQHIKMH. A Glycyl lysine isopeptide (Lys-Gly) (interchain with G-Cter in SUMO2) cross-link involves residue K702. The residue at position 714 (S714) is a Phosphoserine. Residues 748 to 770 form a C2H2-type 4; atypical zinc finger; that stretch reads AVCPYCSLRFFSPELKQEHESKC. Residues K763 and K785 each participate in a glycyl lysine isopeptide (Lys-Gly) (interchain with G-Cter in SUMO2) cross-link. Residues 775–798 form a C2H2-type 5 zinc finger; that stretch reads LTCLECMRTFKSSFSIWRHQVEVH. Residues 806–840 are disordered; that stretch reads TENFSLPVLDHNGDVTGSSRPQSQPEPNKVNHIVT. A compositionally biased stretch (polar residues) spans 820–831; it reads VTGSSRPQSQPE. A Glycyl lysine isopeptide (Lys-Gly) (interchain with G-Cter in SUMO2) cross-link involves residue K875. K879 is covalently cross-linked (Glycyl lysine isopeptide (Lys-Gly) (interchain with G-Cter in SUMO1); alternate). Residue K879 forms a Glycyl lysine isopeptide (Lys-Gly) (interchain with G-Cter in SUMO2); alternate linkage. The interval 879 to 906 is disordered; that stretch reads KEEPVEEAEEEAPEASTAPKEAGPSKEA. Positions 882–891 are enriched in acidic residues; it reads PVEEAEEEAP. The segment at 909–932 adopts a C2H2-type 6; atypical zinc-finger fold; it reads WPCEKCGKMFTVHKQLERHQELLC. K935 participates in a covalent cross-link: Glycyl lysine isopeptide (Lys-Gly) (interchain with G-Cter in SUMO2). The segment at 937-959 adopts a C2H2-type 7 zinc-finger fold; it reads FICHVCNKAFRTNFRLWSHFQSH. The segment at 963-1014 is disordered; that stretch reads ASEESAHKESEVCPVPTNSPSPPPLPPPPPLPKIQPLEPDSPTGLSENPTPA. A compositionally biased stretch (pro residues) spans 979-995; it reads TNSPSPPPLPPPPPLPK. The residue at position 1003 (S1003) is a Phosphoserine. The C2H2-type 8 zinc-finger motif lies at 1043–1065; sequence FMCKLCHRTFKTAFSLWSHEQTH.

Homodimer. Interacts with ZBTB14. Ubiquitous in fetal and adult tissues.

Its subcellular location is the nucleus. Acts as a transcription repressor. This is Zinc finger and BTB domain-containing protein 21 (ZBTB21) from Homo sapiens (Human).